The following is a 152-amino-acid chain: Nucleoside diphosphate kinase A (152 aa).

Positions 12, 60, 88, and 94 each coordinate ATP. Residue Lys-100 forms a Glycyl lysine isopeptide (Lys-Gly) (interchain with G-Cter in ubiquitin) linkage. ATP is bound by residues Arg-105 and Asn-115. The Pros-phosphohistidine intermediate role is filled by His-118. Phosphoserine is present on residues Ser-120 and Ser-122. Lys-124 carries the N6-acetyllysine modification. Ser-125 carries the phosphoserine modification.

The protein belongs to the NDK family. Hexamer of two different chains: An and B (A6, A5B, A4B2, A3B3, A2B4, AB5, B6). Interacts with PRUNE1. Component of the SET complex, composed of at least ANP32A, APEX1, HMGB2, NME1, SET and TREX1. Within this complex, interacts directly with SET. Also interacts with TREX1, but only following translocation to the nucleus. Requires Mg(2+) as cofactor.

The protein localises to the cytoplasm. Its subcellular location is the nucleus. The enzyme catalyses a 2'-deoxyribonucleoside 5'-diphosphate + ATP = a 2'-deoxyribonucleoside 5'-triphosphate + ADP. It catalyses the reaction a ribonucleoside 5'-diphosphate + ATP = a ribonucleoside 5'-triphosphate + ADP. Its activity is regulated as follows. Autophosphorylation at His-118 increases serine/threonine protein kinase activity of the enzyme. Interaction with the SET complex inhibits exonuclease activity. Its function is as follows. Major role in the synthesis of nucleoside triphosphates other than ATP. The ATP gamma phosphate is transferred to the NDP beta phosphate via a ping-pong mechanism, using a phosphorylated active-site intermediate. Possesses nucleoside-diphosphate kinase, serine/threonine-specific protein kinase, geranyl and farnesyl pyrophosphate kinase, histidine protein kinase and 3'-5' exonuclease activities. Involved in cell proliferation, differentiation and development, signal transduction, G protein-coupled receptor endocytosis, and gene expression. Required for neural development including neural patterning and cell fate determination. During GZMA-mediated cell death, works in concert with TREX1. NME1 nicks one strand of DNA and TREX1 removes bases from the free 3' end to enhance DNA damage and prevent DNA end reannealing and rapid repair. This is Nucleoside diphosphate kinase A (Nme1) from Mus musculus (Mouse).